Consider the following 512-residue polypeptide: GMP synthase [glutamine-hydrolyzing] (512 aa).

Residues 7 to 197 (TIIVLDFGSQ…VFGVCGCSEG (191 aa)) enclose the Glutamine amidotransferase type-1 domain. Cys84 acts as the Nucleophile in catalysis. Residues His171 and Glu173 contribute to the active site. Positions 198–387 (WNMENFIEVE…LGIPDEIVWR (190 aa)) constitute a GMPS ATP-PPase domain. Residue 225 to 231 (SGGVDSS) coordinates ATP.

In terms of assembly, homodimer.

The enzyme catalyses XMP + L-glutamine + ATP + H2O = GMP + L-glutamate + AMP + diphosphate + 2 H(+). It participates in purine metabolism; GMP biosynthesis; GMP from XMP (L-Gln route): step 1/1. Functionally, catalyzes the synthesis of GMP from XMP. This chain is GMP synthase [glutamine-hydrolyzing], found in Bacillus cereus (strain ATCC 10987 / NRS 248).